A 264-amino-acid chain; its full sequence is Type III pantothenate kinase (264 aa).

6 to 13 (DVRNTSIE) contributes to the ATP binding site. 109–112 (GADR) serves as a coordination point for substrate. D111 functions as the Proton acceptor in the catalytic mechanism. A K(+)-binding site is contributed by D131. Residue T134 coordinates ATP. T185 lines the substrate pocket.

It belongs to the type III pantothenate kinase family. In terms of assembly, homodimer. NH4(+) is required as a cofactor. Requires K(+) as cofactor.

The protein resides in the cytoplasm. The enzyme catalyses (R)-pantothenate + ATP = (R)-4'-phosphopantothenate + ADP + H(+). Its pathway is cofactor biosynthesis; coenzyme A biosynthesis; CoA from (R)-pantothenate: step 1/5. In terms of biological role, catalyzes the phosphorylation of pantothenate (Pan), the first step in CoA biosynthesis. This is Type III pantothenate kinase from Nocardia farcinica (strain IFM 10152).